A 213-amino-acid chain; its full sequence is Probable nicotinate-nucleotide adenylyltransferase (213 aa).

It belongs to the NadD family.

The catalysed reaction is nicotinate beta-D-ribonucleotide + ATP + H(+) = deamido-NAD(+) + diphosphate. The protein operates within cofactor biosynthesis; NAD(+) biosynthesis; deamido-NAD(+) from nicotinate D-ribonucleotide: step 1/1. Its function is as follows. Catalyzes the reversible adenylation of nicotinate mononucleotide (NaMN) to nicotinic acid adenine dinucleotide (NaAD). This Escherichia coli O45:K1 (strain S88 / ExPEC) protein is Probable nicotinate-nucleotide adenylyltransferase.